We begin with the raw amino-acid sequence, 314 residues long: Lipoyl synthase (314 aa).

Residues C55, C60, C66, C81, C85, C88, and S292 each coordinate [4Fe-4S] cluster. In terms of domain architecture, Radical SAM core spans W67–A281.

The protein belongs to the radical SAM superfamily. Lipoyl synthase family. [4Fe-4S] cluster is required as a cofactor.

It is found in the cytoplasm. It catalyses the reaction [[Fe-S] cluster scaffold protein carrying a second [4Fe-4S](2+) cluster] + N(6)-octanoyl-L-lysyl-[protein] + 2 oxidized [2Fe-2S]-[ferredoxin] + 2 S-adenosyl-L-methionine + 4 H(+) = [[Fe-S] cluster scaffold protein] + N(6)-[(R)-dihydrolipoyl]-L-lysyl-[protein] + 4 Fe(3+) + 2 hydrogen sulfide + 2 5'-deoxyadenosine + 2 L-methionine + 2 reduced [2Fe-2S]-[ferredoxin]. Its pathway is protein modification; protein lipoylation via endogenous pathway; protein N(6)-(lipoyl)lysine from octanoyl-[acyl-carrier-protein]: step 2/2. Its function is as follows. Catalyzes the radical-mediated insertion of two sulfur atoms into the C-6 and C-8 positions of the octanoyl moiety bound to the lipoyl domains of lipoate-dependent enzymes, thereby converting the octanoylated domains into lipoylated derivatives. In Mycolicibacterium smegmatis (strain ATCC 700084 / mc(2)155) (Mycobacterium smegmatis), this protein is Lipoyl synthase.